The following is a 252-amino-acid chain: Uracil-DNA glycosylase (252 aa).

Residue D78 is the Proton acceptor of the active site.

Belongs to the uracil-DNA glycosylase (UDG) superfamily. UNG family.

Its subcellular location is the cytoplasm. The enzyme catalyses Hydrolyzes single-stranded DNA or mismatched double-stranded DNA and polynucleotides, releasing free uracil.. Functionally, excises uracil residues from the DNA which can arise as a result of misincorporation of dUMP residues by DNA polymerase or due to deamination of cytosine. The sequence is that of Uracil-DNA glycosylase from Bordetella avium (strain 197N).